A 379-amino-acid chain; its full sequence is Class V chitinase CHIT5b (379 aa).

Positions 1-26 are cleaved as a signal peptide; that stretch reads MANILNLKHLLTLALILLALATKSST. Residues 34-379 enclose the GH18 domain; the sequence is RVKGIYWLEN…TQASKAWKLV (346 aa). Residues Asn-68, Asn-109, and Asn-128 are each glycosylated (N-linked (GlcNAc...) asparagine). Glu-147 acts as the Proton donor in catalysis. N-linked (GlcNAc...) asparagine glycosylation is found at Asn-192, Asn-227, and Asn-241.

This sequence belongs to the glycosyl hydrolase 18 family. Chitinase class V subfamily.

The enzyme catalyses Random endo-hydrolysis of N-acetyl-beta-D-glucosaminide (1-&gt;4)-beta-linkages in chitin and chitodextrins.. It functions in the pathway glycan degradation; chitin degradation. In terms of biological role, possesses chitinase activity in vitro toward glycol chitin, carboxymethyl-chitin, colloidal chitin, and the chitin oligosaccharides (N-acetylglucosamine) (GlcNAc)6 and (GlcNAc)5. Hydrolyzes (GlcNAc)6 into (GlcNAc)4 and (GlcNAc)2, or two (GlcNAc)3 molecules. Has the capacity to reduce hyphal growth of the fungus Trichoderma viride in an agar-plate bioassay. The sequence is that of Class V chitinase CHIT5b from Medicago truncatula (Barrel medic).